The primary structure comprises 108 residues: Iron-sulfur cluster assembly protein CyaY (108 aa).

It belongs to the frataxin family.

In terms of biological role, involved in iron-sulfur (Fe-S) cluster assembly. May act as a regulator of Fe-S biogenesis. This is Iron-sulfur cluster assembly protein CyaY from Pseudomonas paraeruginosa (strain DSM 24068 / PA7) (Pseudomonas aeruginosa (strain PA7)).